Reading from the N-terminus, the 456-residue chain is Chromosomal replication initiator protein DnaA 1 (456 aa).

The domain I, interacts with DnaA modulators stretch occupies residues 1 to 68 (MRAWEEFLLL…KANLINNNGK (68 aa)). The segment at 68–101 (KPIRVRVTSLDKSTPFKESQIQQEKTAYFTMQYG) is domain II. Positions 102–320 (DIDPQMSFAN…HALTTLAKRV (219 aa)) are domain III, AAA+ region. Ser150, Gly152, Lys153, and Thr154 together coordinate ATP. The domain IV, binds dsDNA stretch occupies residues 321 to 456 (AYKKLSHQLL…AYQSLDLIVD (136 aa)).

The protein belongs to the DnaA family. As to quaternary structure, oligomerizes as a right-handed, spiral filament on DNA at oriC.

The protein localises to the cytoplasm. Plays an essential role in the initiation and regulation of chromosomal replication. ATP-DnaA binds to the origin of replication (oriC) to initiate formation of the DNA replication initiation complex once per cell cycle. Binds the DnaA box (a 9 base pair repeat at the origin) and separates the double-stranded (ds)DNA. Forms a right-handed helical filament on oriC DNA; dsDNA binds to the exterior of the filament while single-stranded (ss)DNA is stabiized in the filament's interior. The ATP-DnaA-oriC complex binds and stabilizes one strand of the AT-rich DNA unwinding element (DUE), permitting loading of DNA polymerase. After initiation quickly degrades to an ADP-DnaA complex that is not apt for DNA replication. Binds acidic phospholipids. In Chlamydia muridarum (strain MoPn / Nigg), this protein is Chromosomal replication initiator protein DnaA 1.